Consider the following 156-residue polypeptide: Small ribosomal subunit protein uS7 (156 aa).

Belongs to the universal ribosomal protein uS7 family. Part of the 30S ribosomal subunit. Contacts proteins S9 and S11.

Functionally, one of the primary rRNA binding proteins, it binds directly to 16S rRNA where it nucleates assembly of the head domain of the 30S subunit. Is located at the subunit interface close to the decoding center, probably blocks exit of the E-site tRNA. This is Small ribosomal subunit protein uS7 from Trichormus variabilis (strain ATCC 29413 / PCC 7937) (Anabaena variabilis).